The primary structure comprises 63 residues: Large ribosomal subunit protein uL29 (63 aa).

It belongs to the universal ribosomal protein uL29 family.

The chain is Large ribosomal subunit protein uL29 from Pelagibacter ubique (strain HTCC1062).